Reading from the N-terminus, the 701-residue chain is Ubiquitin thioesterase zranb1-B (701 aa).

3 consecutive RanBP2-type zinc fingers follow at residues 3–33, 79–108, and 143–173; these read EDGI…PRPS, TSSK…QRRT, and IKGQ…PTPN. The Zn(2+) site is built by cysteine 10, cysteine 13, cysteine 24, cysteine 27, cysteine 85, cysteine 88, cysteine 99, and cysteine 102. Residues 108 to 121 show a composition bias toward polar residues; the sequence is TRSPTESPQSSGSG. Residues 108 to 129 form a disordered region; that stretch reads TRSPTESPQSSGSGLRSIPGPI. Zn(2+) contacts are provided by cysteine 150, cysteine 153, cysteine 164, and cysteine 167. Residues 197–220 are disordered; the sequence is RWRGGCSSSNSQRRSPPTSKRDSD. Positions 202–214 are enriched in polar residues; that stretch reads CSSSNSQRRSPPT. ANK repeat units lie at residues 253 to 283 and 306 to 333; these read RKTD…SGGD and YTLV…QHAA. Residues 425-585 form the OTU domain; that stretch reads LYALWNRTAG…RGHFSALVAM (161 aa). Residue cysteine 436 is the Nucleophile of the active site. Histidine 578 (proton acceptor) is an active-site residue.

Belongs to the peptidase C64 family.

It localises to the cytoplasm. The protein resides in the nucleus. It carries out the reaction Thiol-dependent hydrolysis of ester, thioester, amide, peptide and isopeptide bonds formed by the C-terminal Gly of ubiquitin (a 76-residue protein attached to proteins as an intracellular targeting signal).. Ubiquitin thioesterase, which specifically hydrolyzes 'Lys-29'-linked and 'Lys-33'-linked diubiquitin. Also cleaves 'Lys-63'-linked chains, but with 40-fold less efficiency compared to 'Lys-29'-linked ones. Positive regulator of the Wnt signaling pathway that deubiquitinates apc protein, a negative regulator of Wnt-mediated transcription. Acts as a regulator of autophagy by mediating deubiquitination of pik3c3/vps34, thereby promoting autophagosome maturation. Plays a role in the regulation of cell morphology and cytoskeletal organization. Required in the stress fiber dynamics and cell migration. The protein is Ubiquitin thioesterase zranb1-B (zranb1-b) of Xenopus laevis (African clawed frog).